Here is a 352-residue protein sequence, read N- to C-terminus: Ion-translocating oxidoreductase complex subunit D (352 aa).

Transmembrane regions (helical) follow at residues 20-40 (IMLL…WFFG), 44-64 (LFQI…VLSL), 78-109 (ALLT…IIIA), and 123-143 (PAMI…TSWL). FMN phosphoryl threonine is present on Thr187. 5 consecutive transmembrane segments (helical) span residues 214–234 (VLAG…GVFL), 242–262 (WHIP…GWLF), 267–287 (LASP…FFIL), 301–321 (LIFG…GGYP), and 322–342 (DGVA…DYYT).

The protein belongs to the NqrB/RnfD family. In terms of assembly, the complex is composed of six subunits: RsxA, RsxB, RsxC, RsxD, RsxE and RsxG. Requires FMN as cofactor.

It localises to the cell inner membrane. Its function is as follows. Part of a membrane-bound complex that couples electron transfer with translocation of ions across the membrane. Required to maintain the reduced state of SoxR. This is Ion-translocating oxidoreductase complex subunit D from Salmonella arizonae (strain ATCC BAA-731 / CDC346-86 / RSK2980).